The sequence spans 116 residues: PTS system N,N'-diacetylchitobiose-specific EIIA component (116 aa).

A PTS EIIA type-3 domain is found at 15–113; sequence EELEEVVMGL…ITELIELHEK (99 aa). The Tele-phosphohistidine intermediate role is filled by H89. H89 carries the post-translational modification Phosphohistidine; by HPr.

As to quaternary structure, forms a complex with ChbB (EIIB). ChbA is a homotrimer. Mg(2+) is required as a cofactor.

The protein localises to the cytoplasm. The phosphoenolpyruvate-dependent sugar phosphotransferase system (sugar PTS), a major carbohydrate active transport system, catalyzes the phosphorylation of incoming sugar substrates concomitantly with their translocation across the cell membrane. The enzyme II ChbABC PTS system is involved in the transport of the chitin disaccharide N,N'-diacetylchitobiose (GlcNAc2). The protein is PTS system N,N'-diacetylchitobiose-specific EIIA component (chbA) of Escherichia coli O157:H7.